The following is a 252-amino-acid chain: O-methyltransferase hkm8 (252 aa).

S-adenosyl-L-methionine contacts are provided by residues glutamate 73, 75 to 76 (GT), serine 81, and aspartate 100.

It belongs to the class I-like SAM-binding methyltransferase superfamily. Cation-dependent O-methyltransferase family.

Its pathway is secondary metabolite biosynthesis. O-methyltransferase; part of the gene cluster that mediates the biosynthesis of hancockiamides, an unusual new family of N-cinnamoylated piperazines. The NRPS hkm10 and the NmrA-like reductase hkm9 are proposed to convert two molecules of L-Phe to the intermediary piperazine called xenocockiamide A. Xenocockiamide A is then converted to hancockiamide D via a series of hydroxylations and O-methylations. The tyrosinase hkm6 may catalyze an aromatic hydroxylation, then the 2-oxoglutarate-dependent Fe(II) dioxygenase hkm4 and the FAD-dependent phenol hydroxylase hkm7 may catalyze consecutive hydroxylations to install 2 more hydroxy groups, and the methyltransferase hkm8 probably catalyzes two methylations using 2 molecules of S-adenosyl-L-methionine (SAM). The NRPS hkm11 activates and transfers trans-cinnamate supplied by the PAL hkm12 to hancockiamide D and produces hancockiamide A. NRPS Hkm11 has the flexibility to tolerate the bulky hancockiamide G as a substrate and the absence of the acetyl-transferase hkm3 opens up the opportunity for hkm11 to introduce a second N-cinnamoyl moiety. The cytochrome P450 monooxygenase hkm5 catalyzes the methylenedioxy bridge formation, converting hancockiamide A into hancockiamide G. Hkm5 can also convert hancockiamide B into hancockiamide C, and hancockiamide D into hancockiamide H. The N-acetyltransferase hkm3 finally transfers an acetyl group to 1-N of piperazine, converting hancockiamide A into hancockiamide B and hancockiamide G into hancockiamide C. The protein is O-methyltransferase hkm8 of Aspergillus hancockii.